The sequence spans 340 residues: Glycerol-3-phosphate dehydrogenase [NAD(P)+] (340 aa).

NADPH contacts are provided by S14, W15, and K109. Sn-glycerol 3-phosphate is bound by residues K109, G140, and S142. A144 serves as a coordination point for NADPH. Residues K195, D248, S258, R259, and N260 each coordinate sn-glycerol 3-phosphate. The Proton acceptor role is filled by K195. An NADPH-binding site is contributed by R259. NADPH contacts are provided by V283 and E285.

Belongs to the NAD-dependent glycerol-3-phosphate dehydrogenase family.

It is found in the cytoplasm. The catalysed reaction is sn-glycerol 3-phosphate + NAD(+) = dihydroxyacetone phosphate + NADH + H(+). It catalyses the reaction sn-glycerol 3-phosphate + NADP(+) = dihydroxyacetone phosphate + NADPH + H(+). It participates in membrane lipid metabolism; glycerophospholipid metabolism. In terms of biological role, catalyzes the reduction of the glycolytic intermediate dihydroxyacetone phosphate (DHAP) to sn-glycerol 3-phosphate (G3P), the key precursor for phospholipid synthesis. The sequence is that of Glycerol-3-phosphate dehydrogenase [NAD(P)+] from Syntrophobacter fumaroxidans (strain DSM 10017 / MPOB).